Reading from the N-terminus, the 504-residue chain is D-alanine--D-alanyl carrier protein ligase (504 aa).

An ATP-binding site is contributed by 152 to 153 (TS). Aspartate 197 contacts D-alanine. 292–297 (NTYGPT) contributes to the ATP binding site. Valine 301 contributes to the D-alanine binding site. ATP contacts are provided by residues aspartate 383, 394–397 (YNGR), and lysine 492. Residue lysine 492 participates in D-alanine binding.

Belongs to the ATP-dependent AMP-binding enzyme family. DltA subfamily.

It is found in the cytoplasm. The catalysed reaction is holo-[D-alanyl-carrier protein] + D-alanine + ATP = D-alanyl-[D-alanyl-carrier protein] + AMP + diphosphate. Its pathway is cell wall biogenesis; lipoteichoic acid biosynthesis. Functionally, catalyzes the first step in the D-alanylation of lipoteichoic acid (LTA), the activation of D-alanine and its transfer onto the D-alanyl carrier protein (Dcp) DltC. In an ATP-dependent two-step reaction, forms a high energy D-alanyl-AMP intermediate, followed by transfer of the D-alanyl residue as a thiol ester to the phosphopantheinyl prosthetic group of the Dcp. D-alanylation of LTA plays an important role in modulating the properties of the cell wall in Gram-positive bacteria, influencing the net charge of the cell wall. The chain is D-alanine--D-alanyl carrier protein ligase from Bacillus mycoides (strain KBAB4) (Bacillus weihenstephanensis).